Here is a 649-residue protein sequence, read N- to C-terminus: Choline transporter-like protein 3 (649 aa).

Residues Ala-33–Val-53 form a helical membrane-spanning segment. Asn-136 and Asn-151 each carry an N-linked (GlcNAc...) asparagine glycan. 5 consecutive transmembrane segments (helical) span residues Asp-213–Phe-233, Phe-235–Val-255, Leu-284–Val-304, Leu-334–Leu-354, and Leu-384–Gly-404. N-linked (GlcNAc...) asparagine glycans are attached at residues Asn-414, Asn-502, and Asn-520. 2 consecutive transmembrane segments (helical) span residues Phe-533–Ala-553 and Val-562–Leu-582.

Belongs to the CTL (choline transporter-like) family.

It localises to the membrane. The chain is Choline transporter-like protein 3 (SLC44A3) from Bos taurus (Bovine).